The following is a 326-amino-acid chain: Lipoyl synthase (326 aa).

Cysteine 68, cysteine 73, cysteine 79, cysteine 94, cysteine 98, cysteine 101, and serine 308 together coordinate [4Fe-4S] cluster. Positions 80–297 (FNHGTATFMI…KDVAMGLGFS (218 aa)) constitute a Radical SAM core domain.

It belongs to the radical SAM superfamily. Lipoyl synthase family. [4Fe-4S] cluster is required as a cofactor.

It is found in the cytoplasm. The catalysed reaction is [[Fe-S] cluster scaffold protein carrying a second [4Fe-4S](2+) cluster] + N(6)-octanoyl-L-lysyl-[protein] + 2 oxidized [2Fe-2S]-[ferredoxin] + 2 S-adenosyl-L-methionine + 4 H(+) = [[Fe-S] cluster scaffold protein] + N(6)-[(R)-dihydrolipoyl]-L-lysyl-[protein] + 4 Fe(3+) + 2 hydrogen sulfide + 2 5'-deoxyadenosine + 2 L-methionine + 2 reduced [2Fe-2S]-[ferredoxin]. The protein operates within protein modification; protein lipoylation via endogenous pathway; protein N(6)-(lipoyl)lysine from octanoyl-[acyl-carrier-protein]: step 2/2. Catalyzes the radical-mediated insertion of two sulfur atoms into the C-6 and C-8 positions of the octanoyl moiety bound to the lipoyl domains of lipoate-dependent enzymes, thereby converting the octanoylated domains into lipoylated derivatives. This Aeromonas salmonicida (strain A449) protein is Lipoyl synthase.